Consider the following 703-residue polypeptide: Probable ATP-dependent RNA helicase DHX35 (703 aa).

The region spanning 64 to 229 is the Helicase ATP-binding domain; it reads LYLIENYQTV…FNQNETSDPA (166 aa). 77-84 is an ATP binding site; sequence GETGCGKS. Positions 176–179 match the DEAH box motif; sequence DEAH. The Helicase C-terminal domain occupies 261-438; that stretch reads TVETVVKIHQ…PVILQLKALG (178 aa).

This sequence belongs to the DEAD box helicase family. DEAH subfamily. Identified in the spliceosome C complex.

The enzyme catalyses ATP + H2O = ADP + phosphate + H(+). May be involved in pre-mRNA splicing. This is Probable ATP-dependent RNA helicase DHX35 (DHX35) from Homo sapiens (Human).